The sequence spans 261 residues: Protein LIKE COV 2 (261 aa).

A disordered region spans residues 1–38 (MAEGKEATTSSLSQGLTPHQDPDDAPKSPPNSPNSSTR). Residues 1-56 (MAEGKEATTSSLSQGLTPHQDPDDAPKSPPNSPNSSTRKACYGVLQSWVSKKFMTG) lie on the Cytoplasmic side of the membrane. Over residues 7-17 (ATTSSLSQGLT) the composition is skewed to polar residues. A helical membrane pass occupies residues 57–77 (FVVLFPVAVTFLITWWFIQFV). The Extracellular portion of the chain corresponds to 78-91 (DGFFSPIYENLGVD). The chain crosses the membrane as a helical span at residues 92-112 (IFGLGFITSVLFTFFVGIFAS). The Cytoplasmic portion of the chain corresponds to 113-261 (SWLGSTVFWL…HSLRVPLNRL (149 aa)).

It belongs to the plant COV1 protein family.

It localises to the membrane. The chain is Protein LIKE COV 2 from Arabidopsis thaliana (Mouse-ear cress).